The chain runs to 390 residues: Succinate--CoA ligase [ADP-forming] subunit beta (390 aa).

The 236-residue stretch at 9–244 (KEIFREYGVP…LSEEDPVEVE (236 aa)) folds into the ATP-grasp domain. ATP is bound by residues K46, 53–55 (GRG), E99, A102, and E107. 2 residues coordinate Mg(2+): N199 and D213. Substrate-binding positions include N264 and 321–323 (GIV).

This sequence belongs to the succinate/malate CoA ligase beta subunit family. In terms of assembly, heterotetramer of two alpha and two beta subunits. The cofactor is Mg(2+).

It carries out the reaction succinate + ATP + CoA = succinyl-CoA + ADP + phosphate. The enzyme catalyses GTP + succinate + CoA = succinyl-CoA + GDP + phosphate. It functions in the pathway carbohydrate metabolism; tricarboxylic acid cycle; succinate from succinyl-CoA (ligase route): step 1/1. Succinyl-CoA synthetase functions in the citric acid cycle (TCA), coupling the hydrolysis of succinyl-CoA to the synthesis of either ATP or GTP and thus represents the only step of substrate-level phosphorylation in the TCA. The beta subunit provides nucleotide specificity of the enzyme and binds the substrate succinate, while the binding sites for coenzyme A and phosphate are found in the alpha subunit. This is Succinate--CoA ligase [ADP-forming] subunit beta from Nitratiruptor sp. (strain SB155-2).